Consider the following 2151-residue polypeptide: Calpain-type cysteine protease DEK1 (2151 aa).

The first 32 residues, 1 to 32 (MEGDERGVLLACVISGTLFTVFGSGSFWILWA), serve as a signal peptide directing secretion. The Extracellular segment spans residues 33–69 (VNWRPWRLYSWIFARKWPKVLQGPQLDILCGVLSLFA). The helical transmembrane segment at 70–90 (WIVVVSPIAILIGWGSWLIVI) threads the bilayer. Residues 91 to 94 (LDRH) lie on the Cytoplasmic side of the membrane. The chain crosses the membrane as a helical span at residues 95–115 (IIGLAIIMAGTALLLAFYSIM). Over 116-126 (LWWRTQWQSSR) the chain is Extracellular. A helical transmembrane segment spans residues 127–147 (AVALLLLLGVALLCAYELCAV). At 148–163 (YVTAGAHASQQYSPSG) the chain is on the cytoplasmic side. Residues 164-184 (FFFGVSAIALAINMLFICRMV) traverse the membrane as a helical segment. The Extracellular portion of the chain corresponds to 185–235 (FNGNGLDVDEYVRRAYKFAYSDCIEVGPVACLPEPPDPNELYPRQTSRASH). A helical membrane pass occupies residues 236 to 256 (LGLLYLGSLVVLLAYSVLYGL). The Cytoplasmic portion of the chain corresponds to 257-263 (TARESRW). The chain crosses the membrane as a helical span at residues 264–284 (LGGITSAAVIVLDWNIGACLY). At 285–293 (GFKLLQNRV) the chain is on the extracellular side. Residues 294-314 (LALFVAGISRLFLICFGIHYW) traverse the membrane as a helical segment. The Cytoplasmic segment spans residues 315-319 (YLGHC). A helical membrane pass occupies residues 320–340 (ISYIFVASVLSGAAVSRHLSI). Topologically, residues 341 to 615 (TDPSAARRDA…LLLHHVAGTP (275 aa)) are extracellular. Disordered regions lie at residues 363-393 (RRKEQNSSSSSSDGCGSSIKRSSSIDAGHTG) and 405-442 (CTADNLTRTGSSQEGINSDKSEESGRPSLGLRSSSCRS). Residues 369–388 (SSSSSSDGCGSSIKRSSSID) show a composition bias toward low complexity. Residues 405-420 (CTADNLTRTGSSQEGI) show a composition bias toward polar residues. Residues 430-442 (RPSLGLRSSSCRS) are compositionally biased toward low complexity. A helical membrane pass occupies residues 616-636 (ERAWGLFSLVFILETIIVAIF). Over 637 to 652 (RPKTITIINSSHQQFE) the chain is Cytoplasmic. A helical transmembrane segment spans residues 653–673 (FGFSVLLLSPVVCSIMAFLRS). The Extracellular segment spans residues 674-686 (LQVEEMALTSKSR). Residues 687-707 (KYGFVAWLLSTSVGLSLSFLS) traverse the membrane as a helical segment. At 708 to 711 (KSSV) the chain is on the cytoplasmic side. The chain crosses the membrane as a helical span at residues 712–732 (LLGISLTVPLMAACLSIAVPI). Residues 733-760 (WMHNGYQFWVPQLSCGDQARDLRSPRIK) are Extracellular-facing. The helical transmembrane segment at 761-782 (GFILWICVVLFAGSVISLGAII) threads the bilayer. The Cytoplasmic portion of the chain corresponds to 783–813 (SAKPLDDLKYKLFSARENNVTSPYTSSVYLG). A helical membrane pass occupies residues 814–834 (WAMSSGIALVVTAILPIVSWF). Topologically, residues 835 to 844 (ATYRFSHSSA) are extracellular. The helical transmembrane segment at 845–865 (VCLMIFSVVLVAFCGTSYLEV) threads the bilayer. Residues 866 to 878 (VKSRDDQLPTKGD) are Cytoplasmic-facing. A helical membrane pass occupies residues 879-899 (FLAALLPLACIPALLSLCCGM). The Extracellular segment spans residues 900–912 (VKWKDDCWILSRG). Residues 913-933 (VYVFFSIGLLLLFGAIAAVIA) form a helical membrane-spanning segment. The Cytoplasmic portion of the chain corresponds to 934 to 936 (VKP). The chain crosses the membrane as a helical span at residues 937–957 (WTIGVSFLLVLFLMVVTIGVI). Topologically, residues 958–971 (HLWASNNFYLTRKQ) are extracellular. A helical membrane pass occupies residues 972-992 (TSFVCFLALLLGLAAFLLGWH). At 993–1006 (QDKAFAGASVGYFT) the chain is on the cytoplasmic side. A helical transmembrane segment spans residues 1007 to 1027 (FLSLLAGRALAVLLSPPIVVY). At 1028–1050 (SPRVLPVYVYDAHADCGKNVSAA) the chain is on the extracellular side. A helical membrane pass occupies residues 1051-1071 (FLVLYGIALATEGWGVVASLI). Topologically, residues 1072–2151 (IYPPFAGAAV…TKASIVLEAL (1080 aa)) are cytoplasmic. 2 consecutive Calpain catalytic domains span residues 1407–1600 (SGKH…DMID) and 1695–1997 (QFTD…CRVY). Catalysis depends on residues C1761, H1919, and N1939.

It belongs to the peptidase C2 family. In terms of processing, autocatalytic proteolytic cleavage leading to the production of mainly cytoplasmic localized subproducts of about 85 and 120 kDa. Mostly expressed in meristems and organ primordia. Expressed at low levels in young and germinating seeds at 10 ppm and in seedling roots at 67 ppm. Present in most tissues at a low level.

The protein localises to the cell membrane. The protein resides in the endosome membrane. Its subcellular location is the endoplasmic reticulum membrane. It is found in the cytoplasm. Functionally, essential protease involved in epiderm development. Required for aleurone cell development in the endosperm probably by maintaining and restricting the aleurone and embryonic epidermal L1 cell-layer fates as well as meristems organization. Involved in the maintenance of adaxial/abaxial axis information in developing leaves, probably by regulating cell proliferation and expansion. Does not need calcium ions to be active. Required for the formation of giant cells in sepals by determining cell fate and promoting endoreplication. This is Calpain-type cysteine protease DEK1 from Arabidopsis thaliana (Mouse-ear cress).